The following is a 327-amino-acid chain: Delta(6)-protoilludene synthase HYPSUDRAFT_138665 (327 aa).

Mg(2+) is bound by residues Asp79, Asn215, Ser219, and Glu223. Positions 79-83 (DEHTD) match the DDXXD motif motif. (2E,6E)-farnesyl diphosphate-binding residues include Arg304 and Tyr305.

This sequence belongs to the terpene synthase family. It depends on Mg(2+) as a cofactor.

It carries out the reaction (2E,6E)-farnesyl diphosphate = Delta(6)-protoilludene + diphosphate. Its function is as follows. Terpene cyclase that catalyzes the cyclization of farnesyl diphosphate (FPP) to delta(6)-protoilludene. In Hypholoma sublateritium (strain FD-334 SS-4), this protein is Delta(6)-protoilludene synthase HYPSUDRAFT_138665.